The primary structure comprises 734 residues: Photosystem I P700 chlorophyll a apoprotein A2 (734 aa).

8 helical membrane passes run 46–69 (IFASHFGQLAIIFLWTSGNLFHVA), 135–158 (LYTGALFLLFLSAISLIGGWLHLQ), 175–199 (LNHHLSGLFGVSSLAWTGHLVHVAI), 273–291 (MAHHHLAIAFIFLIAGHMY), 330–353 (LHFQLGLALACLGVITSLVAQHMY), 369–395 (AASYTHHQYIAGFIMTGAFAHGAIFFI), 417–439 (AIISHLSWASLFLGFHTLGLYVH), and 517–535 (FLVHHAIALGLHTTTLILV). Positions 559 and 568 each coordinate [4Fe-4S] cluster. 2 helical membrane passes run 575–596 (AFYLAVFWMLNTIGWVTFYWHW) and 643–665 (LSVWAWMFLFGHLVWATGFMFLI). Residues histidine 654, methionine 662, and tyrosine 670 each contribute to the chlorophyll a site. Tryptophan 671 is a phylloquinone binding site. The helical transmembrane segment at 707-727 (LVGLAHFSVGYIFTYAAFLIA) threads the bilayer.

It belongs to the PsaA/PsaB family. As to quaternary structure, the PsaA/B heterodimer binds the P700 chlorophyll special pair and subsequent electron acceptors. PSI consists of a core antenna complex that captures photons, and an electron transfer chain that converts photonic excitation into a charge separation. The eukaryotic PSI reaction center is composed of at least 11 subunits. Requires P700 is a chlorophyll a/chlorophyll a' dimer, A0 is one or more chlorophyll a, A1 is one or both phylloquinones and FX is a shared 4Fe-4S iron-sulfur center. as cofactor.

Its subcellular location is the plastid. The protein resides in the chloroplast thylakoid membrane. The catalysed reaction is reduced [plastocyanin] + hnu + oxidized [2Fe-2S]-[ferredoxin] = oxidized [plastocyanin] + reduced [2Fe-2S]-[ferredoxin]. Functionally, psaA and PsaB bind P700, the primary electron donor of photosystem I (PSI), as well as the electron acceptors A0, A1 and FX. PSI is a plastocyanin-ferredoxin oxidoreductase, converting photonic excitation into a charge separation, which transfers an electron from the donor P700 chlorophyll pair to the spectroscopically characterized acceptors A0, A1, FX, FA and FB in turn. Oxidized P700 is reduced on the lumenal side of the thylakoid membrane by plastocyanin. This chain is Photosystem I P700 chlorophyll a apoprotein A2, found in Acorus calamus (Sweet flag).